A 34-amino-acid polypeptide reads, in one-letter code: Voltage sensor toxin 3 (34 aa).

Disulfide bonds link Cys2-Cys17, Cys9-Cys22, and Cys16-Cys29.

It belongs to the neurotoxin 10 (Hwtx-1) family. 61 (VSTX3) subfamily. In terms of tissue distribution, expressed by the venom gland.

Its subcellular location is the secreted. Its function is as follows. Potent voltage-gated sodium channel blocker (IC(50)=190 nM and 210 nM on human and rat Nav1.3/SCN3A respectively, 430 nM on human Nav1.7/SCN9A, 770 nM and 290 nM on human and rat Nav1.8/SCN10A, respectively). Binds the voltage-sensor domain of the potassium channel KvAP (from Aeropyrum pernix) and weakly inhibits this channel. The sequence is that of Voltage sensor toxin 3 from Grammostola rosea (Chilean rose tarantula).